The following is a 416-amino-acid chain: Multifunctional CCA protein (416 aa).

Residues Gly-8 and Arg-11 each coordinate ATP. The CTP site is built by Gly-8 and Arg-11. The Mg(2+) site is built by Asp-21 and Asp-23. ATP-binding residues include Arg-91, Arg-137, and Arg-140. Residues Arg-91, Arg-137, and Arg-140 each coordinate CTP. An HD domain is found at 228–329; that stretch reads TGVHTLMVLA…VKIFDKADFW (102 aa).

Belongs to the tRNA nucleotidyltransferase/poly(A) polymerase family. Bacterial CCA-adding enzyme type 1 subfamily. As to quaternary structure, monomer. Can also form homodimers and oligomers. The cofactor is Mg(2+). Requires Ni(2+) as cofactor.

The catalysed reaction is a tRNA precursor + 2 CTP + ATP = a tRNA with a 3' CCA end + 3 diphosphate. It catalyses the reaction a tRNA with a 3' CCA end + 2 CTP + ATP = a tRNA with a 3' CCACCA end + 3 diphosphate. Functionally, catalyzes the addition and repair of the essential 3'-terminal CCA sequence in tRNAs without using a nucleic acid template. Adds these three nucleotides in the order of C, C, and A to the tRNA nucleotide-73, using CTP and ATP as substrates and producing inorganic pyrophosphate. tRNA 3'-terminal CCA addition is required both for tRNA processing and repair. Also involved in tRNA surveillance by mediating tandem CCA addition to generate a CCACCA at the 3' terminus of unstable tRNAs. While stable tRNAs receive only 3'-terminal CCA, unstable tRNAs are marked with CCACCA and rapidly degraded. The sequence is that of Multifunctional CCA protein from Shewanella baltica (strain OS223).